Here is an 80-residue protein sequence, read N- to C-terminus: Acyl carrier protein (80 aa).

One can recognise a Carrier domain in the interval 4–79 (EDIFSKVKDI…DAVDFIASKA (76 aa)). Residue Ser-39 is modified to O-(pantetheine 4'-phosphoryl)serine.

This sequence belongs to the acyl carrier protein (ACP) family. 4'-phosphopantetheine is transferred from CoA to a specific serine of apo-ACP by AcpS. This modification is essential for activity because fatty acids are bound in thioester linkage to the sulfhydryl of the prosthetic group.

Its subcellular location is the cytoplasm. The protein operates within lipid metabolism; fatty acid biosynthesis. In terms of biological role, carrier of the growing fatty acid chain in fatty acid biosynthesis. This is Acyl carrier protein from Synechococcus elongatus (strain ATCC 33912 / PCC 7942 / FACHB-805) (Anacystis nidulans R2).